We begin with the raw amino-acid sequence, 349 residues long: Protein RecA (349 aa).

69–76 (GPESSGKT) lines the ATP pocket.

Belongs to the RecA family.

It localises to the cytoplasm. In terms of biological role, can catalyze the hydrolysis of ATP in the presence of single-stranded DNA, the ATP-dependent uptake of single-stranded DNA by duplex DNA, and the ATP-dependent hybridization of homologous single-stranded DNAs. It interacts with LexA causing its activation and leading to its autocatalytic cleavage. The chain is Protein RecA from Rippkaea orientalis (strain PCC 8801 / RF-1) (Cyanothece sp. (strain PCC 8801)).